Consider the following 1368-residue polypeptide: DNA-directed RNA polymerase subunit beta (1368 aa).

It belongs to the RNA polymerase beta chain family. As to quaternary structure, the RNAP catalytic core consists of 2 alpha, 1 beta, 1 beta' and 1 omega subunit. When a sigma factor is associated with the core the holoenzyme is formed, which can initiate transcription.

It carries out the reaction RNA(n) + a ribonucleoside 5'-triphosphate = RNA(n+1) + diphosphate. Functionally, DNA-dependent RNA polymerase catalyzes the transcription of DNA into RNA using the four ribonucleoside triphosphates as substrates. The protein is DNA-directed RNA polymerase subunit beta of Paraburkholderia xenovorans (strain LB400).